Here is a 602-residue protein sequence, read N- to C-terminus: Leishmanolysin (602 aa).

Positions 1-39 (MSVDSSSTHRRRCVAARLVRLAAAGAAVTVAVGTAAAWA) are cleaved as a signal peptide. Positions 40 to 100 (HAGALQHRCV…DPRPGSARSV (61 aa)) are cleaved as a propeptide — activation peptide. Intrachain disulfides connect Cys125/Cys142 and Cys191/Cys230. A Zn(2+)-binding site is contributed by His264. Residue Glu265 is part of the active site. His268 provides a ligand contact to Zn(2+). Asn300 carries N-linked (GlcNAc...) asparagine glycosylation. Cystine bridges form between Cys314/Cys386, Cys393/Cys455, Cys406/Cys425, Cys415/Cys489, Cys466/Cys510, Cys515/Cys565, and Cys535/Cys558. His334 contacts Zn(2+). A glycan (N-linked (GlcNAc...) asparagine) is linked at Asn407. N-linked (GlcNAc...) asparagine glycosylation occurs at Asn534. Asn577 carries the GPI-anchor amidated asparagine lipid modification. The propeptide at 578–602 (TAAGRRGPRAAATALLVAALLAVAL) is removed in mature form.

Belongs to the peptidase M8 family. Requires Zn(2+) as cofactor. In terms of processing, the phosphatidylinositol moiety of the GPI-anchor contains a fully saturated, unbranched 1-O-alkyl chain (mainly C24:0) and a mixture of fully saturated unbranched 2-O-acyl chains (C12:0, C14:0, C16:0, and C18:0).

It is found in the cell membrane. It carries out the reaction Preference for hydrophobic residues at P1 and P1' and basic residues at P2' and P3'. A model nonapeptide is cleaved at -Ala-Tyr-|-Leu-Lys-Lys-.. In terms of biological role, has an integral role during the infection of macrophages in the mammalian host. The polypeptide is Leishmanolysin (gp63) (Leishmania major).